We begin with the raw amino-acid sequence, 740 residues long: Protein SIEVE ELEMENT OCCLUSION B (740 aa).

Polar residues predominate over residues 1 to 23 (MESLIKSQHAQQLAGHKNTTGKT). The interval 1 to 27 (MESLIKSQHAQQLAGHKNTTGKTPSME) is disordered.

In terms of assembly, can form homodimer. Expressed in phloem sieve elements.

In terms of biological role, scaffold protein required to form the phloem filament matrix in sieve elements. The sequence is that of Protein SIEVE ELEMENT OCCLUSION B from Arabidopsis thaliana (Mouse-ear cress).